The chain runs to 195 residues: Imidazoleglycerol-phosphate dehydratase (195 aa).

This sequence belongs to the imidazoleglycerol-phosphate dehydratase family.

The protein localises to the cytoplasm. It catalyses the reaction D-erythro-1-(imidazol-4-yl)glycerol 3-phosphate = 3-(imidazol-4-yl)-2-oxopropyl phosphate + H2O. The protein operates within amino-acid biosynthesis; L-histidine biosynthesis; L-histidine from 5-phospho-alpha-D-ribose 1-diphosphate: step 6/9. The protein is Imidazoleglycerol-phosphate dehydratase of Aromatoleum aromaticum (strain DSM 19018 / LMG 30748 / EbN1) (Azoarcus sp. (strain EbN1)).